The following is a 490-amino-acid chain: Glutamate--tRNA ligase 2 (490 aa).

Residues 33 to 43 (PSPTGYLHIGG) carry the 'HIGH' region motif. The short motif at 262–266 (KLSKR) is the 'KMSKS' region element. Lysine 265 is a binding site for ATP.

It belongs to the class-I aminoacyl-tRNA synthetase family. Glutamate--tRNA ligase type 1 subfamily. In terms of assembly, monomer.

The protein resides in the cytoplasm. It catalyses the reaction tRNA(Glu) + L-glutamate + ATP = L-glutamyl-tRNA(Glu) + AMP + diphosphate. Functionally, catalyzes the attachment of glutamate to tRNA(Glu) in a two-step reaction: glutamate is first activated by ATP to form Glu-AMP and then transferred to the acceptor end of tRNA(Glu). This chain is Glutamate--tRNA ligase 2, found in Parvibaculum lavamentivorans (strain DS-1 / DSM 13023 / NCIMB 13966).